The primary structure comprises 294 residues: Foldase protein PrsA 1 (294 aa).

Positions 1-21 are cleaved as a signal peptide; sequence MTKLKKVMISVIAATLLLLAG. Cys22 carries the N-palmitoyl cysteine lipid modification. The S-diacylglycerol cysteine moiety is linked to residue Cys22. The PpiC domain occupies 135 to 226; that stretch reads EPDITVRHIL…YGYHLIQLVK (92 aa).

Belongs to the PrsA family.

Its subcellular location is the cell membrane. It carries out the reaction [protein]-peptidylproline (omega=180) = [protein]-peptidylproline (omega=0). Plays a major role in protein secretion by helping the post-translocational extracellular folding of several secreted proteins. This is Foldase protein PrsA 1 (prsA1) from Listeria monocytogenes serovar 1/2a (strain ATCC BAA-679 / EGD-e).